We begin with the raw amino-acid sequence, 299 residues long: Secreted LysM effector ldpB (299 aa).

The N-terminal stretch at 1-19 (MGLTSILIAQVLFLGAANS) is a signal peptide. 3 consecutive LysM domains span residues 46–91 (WVND…SYCV), 135–182 (AFYK…YVCI), and 211–258 (KYHK…YVCV). Asn-154 carries an N-linked (GlcNAc...) asparagine glycan. Low complexity predominate over residues 266-283 (ATATPQPTPQPQQSSSPD). Residues 266–288 (ATATPQPTPQPQQSSSPDQPMPQ) are disordered.

The protein belongs to the secreted LysM effector family.

Its subcellular location is the secreted. It is found in the cell wall. It localises to the extracellular space. The protein localises to the extracellular matrix. Its function is as follows. Cell wall chitin of A.fumigatus recruits lung eosinophils during infection and ldpB might have a role in sequestration of chitin and act as triggers of host immunity to dampen host defense. The protein is Secreted LysM effector ldpB of Aspergillus fumigatus (strain ATCC MYA-4609 / CBS 101355 / FGSC A1100 / Af293) (Neosartorya fumigata).